The primary structure comprises 78 residues: Acyl carrier protein (78 aa).

The Carrier domain occupies 2 to 77 (SDTVERVKKI…DAVKFIDKAS (76 aa)). Ser-37 carries the post-translational modification O-(pantetheine 4'-phosphoryl)serine.

The protein belongs to the acyl carrier protein (ACP) family. 4'-phosphopantetheine is transferred from CoA to a specific serine of apo-ACP by AcpS. This modification is essential for activity because fatty acids are bound in thioester linkage to the sulfhydryl of the prosthetic group.

Its subcellular location is the cytoplasm. The protein operates within lipid metabolism; fatty acid biosynthesis. Carrier of the growing fatty acid chain in fatty acid biosynthesis. The chain is Acyl carrier protein from Bartonella quintana (strain Toulouse) (Rochalimaea quintana).